A 264-amino-acid polypeptide reads, in one-letter code: 3-methyl-2-oxobutanoate hydroxymethyltransferase (264 aa).

The Mg(2+) site is built by Asp-45 and Asp-84. 3-methyl-2-oxobutanoate contacts are provided by residues 45 to 46, Asp-84, and Lys-112; that span reads DS. Residue Glu-114 coordinates Mg(2+). The Proton acceptor role is filled by Glu-181.

Belongs to the PanB family. In terms of assembly, homodecamer; pentamer of dimers. The cofactor is Mg(2+).

It is found in the cytoplasm. It carries out the reaction 3-methyl-2-oxobutanoate + (6R)-5,10-methylene-5,6,7,8-tetrahydrofolate + H2O = 2-dehydropantoate + (6S)-5,6,7,8-tetrahydrofolate. The protein operates within cofactor biosynthesis; (R)-pantothenate biosynthesis; (R)-pantoate from 3-methyl-2-oxobutanoate: step 1/2. Its function is as follows. Catalyzes the reversible reaction in which hydroxymethyl group from 5,10-methylenetetrahydrofolate is transferred onto alpha-ketoisovalerate to form ketopantoate. This Psychromonas ingrahamii (strain DSM 17664 / CCUG 51855 / 37) protein is 3-methyl-2-oxobutanoate hydroxymethyltransferase.